A 475-amino-acid polypeptide reads, in one-letter code: U3 small nucleolar RNA-interacting protein 2 (475 aa).

The interval 1-75 (MSATAAARKR…EEEEELEETA (75 aa)) is disordered. The Nuclear localization signal signature appears at 8 to 40 (RKRGKPASGAGAGAGAGKRRRKADSAGDRGKSK). Position 10 is an omega-N-methylarginine (arginine 10). Residues lysine 12 and lysine 25 each carry the N6-acetyllysine modification. Phosphoserine is present on residues serine 50, serine 51, serine 53, and serine 57. Residues 65–74 (EEEEEELEET) show a composition bias toward acidic residues. Lysine 113 is covalently cross-linked (Glycyl lysine isopeptide (Lys-Gly) (interchain with G-Cter in SUMO2)). WD repeat units follow at residues 144 to 183 (GHQL…KLHV), 197 to 236 (GHSS…HLYT), 239 to 278 (GHRD…YVET), 281 to 320 (GHQD…QLVF), 322 to 360 (GHQG…PLAL), 374 to 413 (EQPF…RQLD), and 419 to 460 (PLVG…NSVC).

It belongs to the WD repeat RRP9 family. As to quaternary structure, interacts specifically with the U3 small nucleolar RNA (U3 snoRNA). Binds a sub-fragment of the U3 snoRNA surrounding the B/C motif (3UBC). This association with the U3BC RNA is dependent on the binding of a protein called 15.5K to the box B/C motif. The association of the protein with the U3BC RNA was found to be also dependent on a conserved RNA structure that flanks the box B/C motif. Part of the small subunit (SSU) processome, composed of more than 70 proteins and the RNA chaperone small nucleolar RNA (snoRNA) U3. Post-translationally, acetylation at Lys-12 and Lys-25 by KAT2B/PCAF under stress impairs pre-rRNA processing. Deacetylation by SIRT7 enhances RRP9-binding to U3 snoRNA, which is a prerequisite for pre-rRNA processing.

The protein resides in the nucleus. Its subcellular location is the nucleolus. Functionally, component of a nucleolar small nuclear ribonucleoprotein particle (snoRNP) thought to participate in the processing and modification of pre-ribosomal RNA (pre-rRNA). Part of the small subunit (SSU) processome, first precursor of the small eukaryotic ribosomal subunit. During the assembly of the SSU processome in the nucleolus, many ribosome biogenesis factors, an RNA chaperone and ribosomal proteins associate with the nascent pre-rRNA and work in concert to generate RNA folding, modifications, rearrangements and cleavage as well as targeted degradation of pre-ribosomal RNA by the RNA exosome. The protein is U3 small nucleolar RNA-interacting protein 2 of Homo sapiens (Human).